The following is a 209-amino-acid chain: Ubiquitin-conjugating enzyme E2 S (209 aa).

Positions 14-160 (QTIRQVMREL…ARMMTEIHAQ (147 aa)) constitute a UBC core domain. The active-site Glycyl thioester intermediate is the cysteine 98. The segment at 165–209 (GVGATGDAKDDGGPSTKKHAGLDKKLQDKKKEKLLKEKKRMLKRL) is disordered. Basic and acidic residues predominate over residues 184-199 (AGLDKKLQDKKKEKLL). Residues 200–209 (KEKKRMLKRL) show a composition bias toward basic residues.

This sequence belongs to the ubiquitin-conjugating enzyme family.

The enzyme catalyses S-ubiquitinyl-[E1 ubiquitin-activating enzyme]-L-cysteine + [E2 ubiquitin-conjugating enzyme]-L-cysteine = [E1 ubiquitin-activating enzyme]-L-cysteine + S-ubiquitinyl-[E2 ubiquitin-conjugating enzyme]-L-cysteine.. Its pathway is protein modification; protein ubiquitination. Functionally, catalyzes the covalent attachment of ubiquitin to other proteins. Acts as an essential factor of the anaphase promoting complex/cyclosome (APC/C), a cell cycle-regulated ubiquitin ligase that controls progression through mitosis. Acts by specifically elongating polyubiquitin chains initiated by the E2 enzyme vih/UbcH10 on APC/C substrates, enhancing the degradation of APC/C substrates by the proteasome and promoting mitotic exit. The sequence is that of Ubiquitin-conjugating enzyme E2 S from Drosophila simulans (Fruit fly).